The primary structure comprises 168 residues: Crossover junction endodeoxyribonuclease RuvC (168 aa).

Catalysis depends on residues aspartate 7, glutamate 67, and histidine 139. Positions 7, 67, and 139 each coordinate Mg(2+).

Belongs to the RuvC family. Homodimer which binds Holliday junction (HJ) DNA. The HJ becomes 2-fold symmetrical on binding to RuvC with unstacked arms; it has a different conformation from HJ DNA in complex with RuvA. In the full resolvosome a probable DNA-RuvA(4)-RuvB(12)-RuvC(2) complex forms which resolves the HJ. Mg(2+) serves as cofactor.

Its subcellular location is the cytoplasm. The catalysed reaction is Endonucleolytic cleavage at a junction such as a reciprocal single-stranded crossover between two homologous DNA duplexes (Holliday junction).. Functionally, the RuvA-RuvB-RuvC complex processes Holliday junction (HJ) DNA during genetic recombination and DNA repair. Endonuclease that resolves HJ intermediates. Cleaves cruciform DNA by making single-stranded nicks across the HJ at symmetrical positions within the homologous arms, yielding a 5'-phosphate and a 3'-hydroxyl group; requires a central core of homology in the junction. The consensus cleavage sequence is 5'-(A/T)TT(C/G)-3'. Cleavage occurs on the 3'-side of the TT dinucleotide at the point of strand exchange. HJ branch migration catalyzed by RuvA-RuvB allows RuvC to scan DNA until it finds its consensus sequence, where it cleaves and resolves the cruciform DNA. This Deinococcus geothermalis (strain DSM 11300 / CIP 105573 / AG-3a) protein is Crossover junction endodeoxyribonuclease RuvC.